Reading from the N-terminus, the 357-residue chain is Phosphoribosylformylglycinamidine cyclo-ligase (357 aa).

It belongs to the AIR synthase family.

It is found in the cytoplasm. It catalyses the reaction 2-formamido-N(1)-(5-O-phospho-beta-D-ribosyl)acetamidine + ATP = 5-amino-1-(5-phospho-beta-D-ribosyl)imidazole + ADP + phosphate + H(+). The protein operates within purine metabolism; IMP biosynthesis via de novo pathway; 5-amino-1-(5-phospho-D-ribosyl)imidazole from N(2)-formyl-N(1)-(5-phospho-D-ribosyl)glycinamide: step 2/2. The polypeptide is Phosphoribosylformylglycinamidine cyclo-ligase (Rhizobium etli (strain CIAT 652)).